The chain runs to 456 residues: Bifunctional protein GlmU (456 aa).

A pyrophosphorylase region spans residues 1–229 (MYNCAIILAA…FEETMGVNSR (229 aa)). UDP-N-acetyl-alpha-D-glucosamine-binding positions include 8-11 (LAAG), Lys22, Gln73, and 78-79 (GT). Asp103 is a binding site for Mg(2+). The UDP-N-acetyl-alpha-D-glucosamine site is built by Gly140, Glu155, Asn170, and Asn227. Asn227 lines the Mg(2+) pocket. The tract at residues 230–250 (VQLAEAEKIMRNRINKIHMEN) is linker. Positions 251–456 (GVTLIDHNNT…SWVYKKGLKK (206 aa)) are N-acetyltransferase. Residues Arg332 and Lys350 each coordinate UDP-N-acetyl-alpha-D-glucosamine. His362 serves as the catalytic Proton acceptor. The UDP-N-acetyl-alpha-D-glucosamine site is built by Tyr365 and Asn376. Acetyl-CoA-binding positions include 385–386 (NY), Ala422, and Arg439.

This sequence in the N-terminal section; belongs to the N-acetylglucosamine-1-phosphate uridyltransferase family. In the C-terminal section; belongs to the transferase hexapeptide repeat family. Homotrimer. Requires Mg(2+) as cofactor.

It is found in the cytoplasm. It carries out the reaction alpha-D-glucosamine 1-phosphate + acetyl-CoA = N-acetyl-alpha-D-glucosamine 1-phosphate + CoA + H(+). It catalyses the reaction N-acetyl-alpha-D-glucosamine 1-phosphate + UTP + H(+) = UDP-N-acetyl-alpha-D-glucosamine + diphosphate. It participates in nucleotide-sugar biosynthesis; UDP-N-acetyl-alpha-D-glucosamine biosynthesis; N-acetyl-alpha-D-glucosamine 1-phosphate from alpha-D-glucosamine 6-phosphate (route II): step 2/2. The protein operates within nucleotide-sugar biosynthesis; UDP-N-acetyl-alpha-D-glucosamine biosynthesis; UDP-N-acetyl-alpha-D-glucosamine from N-acetyl-alpha-D-glucosamine 1-phosphate: step 1/1. Its pathway is bacterial outer membrane biogenesis; LPS lipid A biosynthesis. In terms of biological role, catalyzes the last two sequential reactions in the de novo biosynthetic pathway for UDP-N-acetylglucosamine (UDP-GlcNAc). The C-terminal domain catalyzes the transfer of acetyl group from acetyl coenzyme A to glucosamine-1-phosphate (GlcN-1-P) to produce N-acetylglucosamine-1-phosphate (GlcNAc-1-P), which is converted into UDP-GlcNAc by the transfer of uridine 5-monophosphate (from uridine 5-triphosphate), a reaction catalyzed by the N-terminal domain. In Clostridium kluyveri (strain NBRC 12016), this protein is Bifunctional protein GlmU.